Here is a 242-residue protein sequence, read N- to C-terminus: Large ribosomal subunit protein uL1 (242 aa).

It belongs to the universal ribosomal protein uL1 family. Part of the 50S ribosomal subunit.

In terms of biological role, binds directly to 23S rRNA. The L1 stalk is quite mobile in the ribosome, and is involved in E site tRNA release. Functionally, protein L1 is also a translational repressor protein, it controls the translation of the L11 operon by binding to its mRNA. The sequence is that of Large ribosomal subunit protein uL1 from Dictyoglomus turgidum (strain DSM 6724 / Z-1310).